An 80-amino-acid polypeptide reads, in one-letter code: Small ribosomal subunit protein bS16 (80 aa).

Belongs to the bacterial ribosomal protein bS16 family.

This Hydrogenovibrio crunogenus (strain DSM 25203 / XCL-2) (Thiomicrospira crunogena) protein is Small ribosomal subunit protein bS16.